The chain runs to 127 residues: Small ribosomal subunit protein uS13 (127 aa).

The tract at residues 99–127 is disordered; the sequence is RGQRTRTNARTRRGRRGQAIGIKKKTLKK.

Belongs to the universal ribosomal protein uS13 family. Part of the 30S ribosomal subunit. Forms a loose heterodimer with protein S19. Forms two bridges to the 50S subunit in the 70S ribosome.

Functionally, located at the top of the head of the 30S subunit, it contacts several helices of the 16S rRNA. In the 70S ribosome it contacts the 23S rRNA (bridge B1a) and protein L5 of the 50S subunit (bridge B1b), connecting the 2 subunits; these bridges are implicated in subunit movement. Contacts the tRNAs in the A and P-sites. The protein is Small ribosomal subunit protein uS13 of Roseiflexus castenholzii (strain DSM 13941 / HLO8).